The following is a 472-amino-acid chain: Violaxanthin de-epoxidase, chloroplastic (472 aa).

6 disulfides stabilise this stretch: C133–C151, C138–C145, C157–C174, C161–C170, C189–C196, and C242–C372. The stretch at 379 to 462 (VERLEKTVEE…MEAGEVEKLF (84 aa)) forms a coiled coil.

This sequence belongs to the calycin superfamily. Lipocalin family. Disulfide bonds. Reduction of the disulfides results in loss of a rigid structure, a decrease in thermal stability of 15 degrees Celsius and a loss of activity.

The protein resides in the plastid. Its subcellular location is the chloroplast thylakoid membrane. It catalyses the reaction all-trans-violaxanthin + 2 L-ascorbate = all-trans-zeaxanthin + 2 L-dehydroascorbate + 2 H2O. Irreversibly inhibited by DTT and iodoacetamide at pH 5.7 or pH 5.2, but not at pH 7.2. Regulated through Ca(2+) gating of H(+) flux at the CFoH(+) channel. Requires the presence of lipids forming reverse hexagonal structures such as monogalactosyldiacylglyceride (MGDG) or phosphatidylethanolamine. A negative curvature elastic stress in the thylakoid lipid bilayer is required for VDE1 activity. Functionally, part of the xanthophyll (or violaxanthin) cycle for controlling the concentration of zeaxanthin in chloroplasts. Catalyzes the two-step mono de-epoxidation reaction. Stereospecific for all-trans xanthophylls. Zeaxanthin induces the dissipation of excitation energy in the chlorophyll of the light-harvesting protein complex of photosystem II. The chain is Violaxanthin de-epoxidase, chloroplastic from Spinacia oleracea (Spinach).